Reading from the N-terminus, the 417-residue chain is Histidinol-phosphate aminotransferase 1, chloroplastic (417 aa).

The N-terminal 40 residues, 1 to 40, are a transit peptide targeting the chloroplast; that stretch reads MGVINVQGSPSFSIHSSESNLRKSRALKKPFCSIRNRVYC. Ala41 carries the N-acetylalanine modification. Position 277 is an N6-(pyridoxal phosphate)lysine (Lys277).

This sequence belongs to the class-II pyridoxal-phosphate-dependent aminotransferase family. Histidinol-phosphate aminotransferase subfamily. As to quaternary structure, homodimer. Requires pyridoxal 5'-phosphate as cofactor. As to expression, expressed in both vegetative and reproductive tissues.

Its subcellular location is the plastid. It is found in the chloroplast. It carries out the reaction L-histidinol phosphate + 2-oxoglutarate = 3-(imidazol-4-yl)-2-oxopropyl phosphate + L-glutamate. The protein operates within amino-acid biosynthesis; L-histidine biosynthesis; L-histidine from 5-phospho-alpha-D-ribose 1-diphosphate: step 7/9. In Arabidopsis thaliana (Mouse-ear cress), this protein is Histidinol-phosphate aminotransferase 1, chloroplastic (HISN6A).